The sequence spans 35 residues: Coenzyme PQQ synthesis protein A (35 aa).

A cross-link (pyrroloquinoline quinone (Glu-Tyr)) is located at residues 16–20 (EINMY).

This sequence belongs to the PqqA family.

The protein operates within cofactor biosynthesis; pyrroloquinoline quinone biosynthesis. Its function is as follows. Required for coenzyme pyrroloquinoline quinone (PQQ) biosynthesis. PQQ is probably formed by cross-linking a specific glutamate to a specific tyrosine residue and excising these residues from the peptide. This chain is Coenzyme PQQ synthesis protein A, found in Roseobacter denitrificans (strain ATCC 33942 / OCh 114) (Erythrobacter sp. (strain OCh 114)).